A 105-amino-acid chain; its full sequence is BLOC-1-related complex subunit 7 (105 aa).

It belongs to the BORCS7 family. As to quaternary structure, component of the BLOC-one-related complex (BORC) which is composed of BLOC1S1, BLOC1S2, BORCS5, BORCS6, BORCS7, BORCS8, KXD1 and SNAPIN.

The protein resides in the lysosome membrane. Functionally, as part of the BORC complex may play a role in lysosomes movement and localization at the cell periphery. Associated with the cytosolic face of lysosomes, the BORC complex may recruit ARL8B and couple lysosomes to microtubule plus-end-directed kinesin motor. The protein is BLOC-1-related complex subunit 7 of Mus musculus (Mouse).